We begin with the raw amino-acid sequence, 521 residues long: Probable xyloglucan galactosyltransferase GT14 (521 aa).

The Cytoplasmic portion of the chain corresponds to 1–30 (MRPKNYSQMEKPISITTGKFRTNNNNNHNN). The helical; Signal-anchor for type II membrane protein transmembrane segment at 31 to 51 (VWFVVPLFFILCFVLLCFDYS) threads the bilayer. Over 52-521 (ALFTDTDETA…SPYEEPQVLA (470 aa)) the chain is Lumenal. A disordered region spans residues 72-92 (TSSEFTKDDNFSRFPDDPSPD). Positions 76–87 (FTKDDNFSRFPD) are enriched in basic and acidic residues. N-linked (GlcNAc...) asparagine glycosylation is found at N81, N177, N203, N249, N265, and N411. The disordered stretch occupies residues 492-521 (RQGKDGSDGFDDRDDYKYTFSPYEEPQVLA).

The protein belongs to the glycosyltransferase 47 family. As to expression, expressed in roots, hypocotyls, cotyledons, leaves, stems, stamens and carpels.

The protein localises to the golgi apparatus membrane. Its function is as follows. Functions in xyloglucan synthesis by adding side chains to the xylosylated glucan backbone. Involved in the galactosylation of hemicellulose xyloglucan. This is Probable xyloglucan galactosyltransferase GT14 from Arabidopsis thaliana (Mouse-ear cress).